The primary structure comprises 190 residues: MPFLQIFLLSIGVAADAFACSVVRGTAIRVNLFKRALVLAGIFGVFQAAMPLIGWVIGRFFAGITFIAEIDHWIAFALLGVVGAKMIWDAFQPEDDETIVDDGRVQFRPAIILGLATSIDALAVGMGLAFVEVSILKVALSMGLITFALSLVGAWIGHHGGGKFGKWATILGGIILIGIGANIVYEHLSA.

6 helical membrane passes run 3-23, 37-57, 72-88, 111-131, 138-158, and 164-184; these read FLQIFLLSIGVAADAFACSVV, LVLAGIFGVFQAAMPLIGWVI, HWIAFALLGVVGAKMIW, IILGLATSIDALAVGMGLAFV, VALSMGLITFALSLVGAWIGH, and FGKWATILGGIILIGIGANIV.

This sequence belongs to the MntP (TC 9.B.29) family.

The protein localises to the cell membrane. Its function is as follows. Probably functions as a manganese efflux pump. The sequence is that of Putative manganese efflux pump MntP from Corynebacterium glutamicum (strain R).